A 421-amino-acid chain; its full sequence is Phosphatidate cytidylyltransferase 1 (421 aa).

Met-1 bears the N-acetylmethionine mark. The segment covering 1 to 12 (MEEENVTSSPST) has biased composition (polar residues). The disordered stretch occupies residues 1–26 (MEEENVTSSPSTPVHRLRHRRRSNEV). Helical transmembrane passes span 60-80 (IGGF…MVVV), 102-122 (LPYI…FVYG), 149-169 (YHMA…ILTL), 183-203 (WTHM…ANIF), 206-226 (IFWF…AYIF), 246-266 (GFIG…NILG), 321-341 (LCLG…ASGF), and 369-389 (VMAV…SVSV).

Belongs to the CDS family. Mg(2+) serves as cofactor.

The protein localises to the membrane. The enzyme catalyses a 1,2-diacyl-sn-glycero-3-phosphate + CTP + H(+) = a CDP-1,2-diacyl-sn-glycerol + diphosphate. It participates in phospholipid metabolism; CDP-diacylglycerol biosynthesis; CDP-diacylglycerol from sn-glycerol 3-phosphate: step 3/3. May be involved in the synthesis of minor phospholipids and in modulation of IP3-mediated signal transduction. The sequence is that of Phosphatidate cytidylyltransferase 1 from Arabidopsis thaliana (Mouse-ear cress).